A 227-amino-acid polypeptide reads, in one-letter code: Cytochrome c oxidase subunit 2 (227 aa).

Topologically, residues 1–14 are mitochondrial intermembrane; that stretch reads MAYPMQLGFQDATS. The helical transmembrane segment at 15–45 threads the bilayer; the sequence is PIMEELLHFHDHTLMIVLLISSLVLYIISLM. At 46–59 the chain is on the mitochondrial matrix side; that stretch reads LTTKLTHTSTMDAQ. A helical transmembrane segment spans residues 60-87; the sequence is EVETIWTILPAIILILIALPSLRILYMM. Residues 88 to 227 are Mitochondrial intermembrane-facing; sequence DEINNPSLTV…YFEKWSASML (140 aa). Positions 161, 196, 198, 200, 204, and 207 each coordinate Cu cation. E198 contributes to the Mg(2+) binding site. Y218 is subject to Phosphotyrosine.

It belongs to the cytochrome c oxidase subunit 2 family. In terms of assembly, component of the cytochrome c oxidase (complex IV, CIV), a multisubunit enzyme composed of 14 subunits. The complex is composed of a catalytic core of 3 subunits MT-CO1, MT-CO2 and MT-CO3, encoded in the mitochondrial DNA, and 11 supernumerary subunits COX4I, COX5A, COX5B, COX6A, COX6B, COX6C, COX7A, COX7B, COX7C, COX8 and NDUFA4, which are encoded in the nuclear genome. The complex exists as a monomer or a dimer and forms supercomplexes (SCs) in the inner mitochondrial membrane with NADH-ubiquinone oxidoreductase (complex I, CI) and ubiquinol-cytochrome c oxidoreductase (cytochrome b-c1 complex, complex III, CIII), resulting in different assemblies (supercomplex SCI(1)III(2)IV(1) and megacomplex MCI(2)III(2)IV(2)). Found in a complex with TMEM177, COA6, COX18, COX20, SCO1 and SCO2. Interacts with TMEM177 in a COX20-dependent manner. Interacts with COX20. Interacts with COX16. The cofactor is Cu cation.

The protein resides in the mitochondrion inner membrane. The enzyme catalyses 4 Fe(II)-[cytochrome c] + O2 + 8 H(+)(in) = 4 Fe(III)-[cytochrome c] + 2 H2O + 4 H(+)(out). In terms of biological role, component of the cytochrome c oxidase, the last enzyme in the mitochondrial electron transport chain which drives oxidative phosphorylation. The respiratory chain contains 3 multisubunit complexes succinate dehydrogenase (complex II, CII), ubiquinol-cytochrome c oxidoreductase (cytochrome b-c1 complex, complex III, CIII) and cytochrome c oxidase (complex IV, CIV), that cooperate to transfer electrons derived from NADH and succinate to molecular oxygen, creating an electrochemical gradient over the inner membrane that drives transmembrane transport and the ATP synthase. Cytochrome c oxidase is the component of the respiratory chain that catalyzes the reduction of oxygen to water. Electrons originating from reduced cytochrome c in the intermembrane space (IMS) are transferred via the dinuclear copper A center (CU(A)) of subunit 2 and heme A of subunit 1 to the active site in subunit 1, a binuclear center (BNC) formed by heme A3 and copper B (CU(B)). The BNC reduces molecular oxygen to 2 water molecules using 4 electrons from cytochrome c in the IMS and 4 protons from the mitochondrial matrix. This Bubalus depressicornis (Lowland anoa) protein is Cytochrome c oxidase subunit 2 (MT-CO2).